Consider the following 294-residue polypeptide: Store-operated calcium entry regulator STIMATE (294 aa).

The segment at 1 to 22 is disordered; sequence MQGPAGNASRGLPGGPPSTVAS. Residues 1–28 are Cytoplasmic-facing; sequence MQGPAGNASRGLPGGPPSTVASGAGRCE. Transmembrane regions (helical) follow at residues 29–49, 69–89, and 102–122; these read SGALMHSFGIFLQGLLGVVAF, IWFLDTSKQAIGMLFIHFANV, and LYLINFLLDATVGMLLIYVGV. The GXXXG motif motif lies at 149–153; sequence GAWVG. The next 2 membrane-spanning stretches (helical) occupy residues 156–176 and 194–214; these read ALYIVIMIFEKSVVFIVLLIL and LAIVMLIVPFFVNALMFWVVD. Residues 215-294 are Cytoplasmic-facing; that stretch reads NFLMRKGKTK…KKKHRFGLPV (80 aa). Residues 227–268 are disordered; it reads LEERGANQDSRNGSKVRYRRAASHEESESEILISADDEMEES. The segment at 241–246 is required for localization in the endoplasmic reticulum; it reads KVRYRR.

This sequence belongs to the STIMATE family. In terms of assembly, homooligomer. Interacts with STIM1. In terms of tissue distribution, widely expressed.

The protein localises to the endoplasmic reticulum membrane. Its function is as follows. Acts as a regulator of store-operated Ca(2+) entry (SOCE) at junctional sites that connect the endoplasmic reticulum (ER) and plasma membrane (PM), called ER-plasma membrane (ER-PM) junction or cortical ER. SOCE is a Ca(2+) influx following depletion of intracellular Ca(2+) stores. Acts by interacting with STIM1, promoting STIM1 conformational switch. Involved in STIM1 relocalization to ER-PM junctions. Contributes to the maintenance and reorganization of store-dependent ER-PM junctions. This chain is Store-operated calcium entry regulator STIMATE, found in Homo sapiens (Human).